Here is a 127-residue protein sequence, read N- to C-terminus: Large ribosomal subunit protein bL12 (127 aa).

This sequence belongs to the bacterial ribosomal protein bL12 family. Homodimer. Part of the ribosomal stalk of the 50S ribosomal subunit. Forms a multimeric L10(L12)X complex, where L10 forms an elongated spine to which 2 to 4 L12 dimers bind in a sequential fashion. Binds GTP-bound translation factors.

Its function is as follows. Forms part of the ribosomal stalk which helps the ribosome interact with GTP-bound translation factors. Is thus essential for accurate translation. The sequence is that of Large ribosomal subunit protein bL12 from Streptomyces virginiae (Streptomyces cinnamonensis).